A 243-amino-acid chain; its full sequence is 1-(5-phosphoribosyl)-5-[(5-phosphoribosylamino)methylideneamino] imidazole-4-carboxamide isomerase (243 aa).

Residue Asp-8 is the Proton acceptor of the active site. The active-site Proton donor is Asp-129.

Belongs to the HisA/HisF family.

The protein localises to the cytoplasm. The enzyme catalyses 1-(5-phospho-beta-D-ribosyl)-5-[(5-phospho-beta-D-ribosylamino)methylideneamino]imidazole-4-carboxamide = 5-[(5-phospho-1-deoxy-D-ribulos-1-ylimino)methylamino]-1-(5-phospho-beta-D-ribosyl)imidazole-4-carboxamide. The protein operates within amino-acid biosynthesis; L-histidine biosynthesis; L-histidine from 5-phospho-alpha-D-ribose 1-diphosphate: step 4/9. This is 1-(5-phosphoribosyl)-5-[(5-phosphoribosylamino)methylideneamino] imidazole-4-carboxamide isomerase from Brucella anthropi (strain ATCC 49188 / DSM 6882 / CCUG 24695 / JCM 21032 / LMG 3331 / NBRC 15819 / NCTC 12168 / Alc 37) (Ochrobactrum anthropi).